The chain runs to 1009 residues: Glutamate receptor ionotropic, delta-1 (1009 aa).

The first 20 residues, 1-20 (MEALTLWLLPWICQCVSVRA), serve as a signal peptide directing secretion. Residues 21 to 436 (DSIIHIGAIF…ERPMGSRLQG (416 aa)) form an interaction with CBLN1 region. Residues 21–562 (DSIIHIGAIF…SIFSLFAPFD (542 aa)) lie on the Extracellular side of the membrane. Disulfide bonds link Cys80–Cys351, Cys96–Cys128, and Cys294–Cys306. Residues Asn131 and Asn200 are each glycosylated (N-linked (GlcNAc...) asparagine). N-linked (GlcNAc...) asparagine glycans are attached at residues Asn422 and Asn498. Ca(2+) is bound by residues Glu527, Val530, and Asp531. Residues 563 to 583 (FAVWACIAAAIPVVGVLIFVL) traverse the membrane as a helical segment. Over 584–637 (NRIQAVRAQSAAQPRPSASATLHSAIWIVYGAFVQQGGESSVNSMAMRIVMGSW) the chain is Cytoplasmic. A helical membrane pass occupies residues 638–658 (WLFTLIVCSSYTANLAAFLTV). Over 659–830 (SRMDNPIRTF…ADGKSLKLHS (172 aa)) the chain is Extracellular. Asp753, Asp755, and Ser757 together coordinate Ca(2+). A helical transmembrane segment spans residues 831 to 851 (FAGVFCILAIGLLLACLVAAL). Over 852–1009 (ELWWNSNRCH…ALDTSHGTSI (158 aa)) the chain is Cytoplasmic. Over residues 930 to 942 (FLPEQSSHGTSRT) the composition is skewed to polar residues. The tract at residues 930 to 954 (FLPEQSSHGTSRTLSSGPSSNLPLP) is disordered. The span at 943-954 (LSSGPSSNLPLP) shows a compositional bias: low complexity.

Belongs to the glutamate-gated ion channel (TC 1.A.10.1) family. GRID1 subfamily. In terms of assembly, homodimer. Interacts (via extracellular N-terminal domain) with CBLN1 (via C1q domain), and more weakly with CBLN2; the interactions mediate the trans-synaptic adhesion complexes also with neurexins and are required for ligand-gated cation channel activity.

It is found in the postsynaptic cell membrane. The enzyme catalyses Ca(2+)(in) = Ca(2+)(out). It catalyses the reaction Na(+)(in) = Na(+)(out). Functionally, member of the ionotropic glutamate receptor family, which plays a crucial role in synaptic organization and signal transduction in the central nervous system. Although it shares structural features with ionotropic glutamate receptors, does not bind glutamate as a primary ligand. Instead, forms trans-synaptic adhesion complexes with presynaptic neurexins and cerebellins, regulating NMDA and AMPA receptor activity and influencing synaptic plasticity through signal transduction. In the presence of neurexins and cerebellins, forms cation-selective channels that are proposed to be gated by glycine and D-serine. However, recent research disputes this ligand-gated cation channel activity. Cation-selective ion channel can be triggered by GRM1 in dopaminergic neurons. Also acts as a receptor for GABA, modulating inhibitory synaptic plasticity through non-ionotropic mechanisms. The sequence is that of Glutamate receptor ionotropic, delta-1 from Homo sapiens (Human).